Here is a 495-residue protein sequence, read N- to C-terminus: Homeobox protein ceh-21 (495 aa).

Residues 1–14 (MSQQFQASSGTGSA) are compositionally biased toward polar residues. Disordered stretches follow at residues 1–24 (MSQQ…TEHE) and 89–267 (TAES…PGGE). Residues 106 to 120 (LEEKSDKSSDGDGTS) are compositionally biased toward basic and acidic residues. Acidic residues predominate over residues 132–145 (NETEEDHEEKEDEA). Positions 149–162 (SRRESTRLKRKLLE) are enriched in basic and acidic residues. Polar residues-rich tracts occupy residues 163-179 (SQKT…ASSK) and 199-217 (TPEQ…TVRA). The segment covering 218–233 (SSTCGSSVSSTSTVSS) has biased composition (low complexity). The segment covering 242 to 254 (RATETPKLEELAP) has biased composition (basic and acidic residues). The segment at residues 284 to 370 (NAQIGDDEEL…VRRALCFLPK (87 aa)) is a DNA-binding region (CUT). Positions 389-449 (KTVKVIRLTF…MNSRRRLRID (61 aa)) form a DNA-binding region, homeobox. The segment at 450–473 (QQISRSSRSTGNGADTEDELDEED) is disordered. Over residues 464 to 473 (DTEDELDEED) the composition is skewed to acidic residues.

This sequence belongs to the CUT homeobox family.

The protein resides in the nucleus. In terms of biological role, probable DNA-binding regulatory protein involved in cell-fate specification. The protein is Homeobox protein ceh-21 (ceh-21) of Caenorhabditis elegans.